Consider the following 639-residue polypeptide: Transcription factor phomR (639 aa).

A DNA-binding region (zn(2)-C6 fungal-type) is located at residues 14 to 41; the sequence is CWTCRLRRKKCNEGGPPCDNCEARGIHC. 2 disordered regions span residues 58 to 136 and 476 to 499; these read REEA…AGTG and LPRS…TGPE. Residues 68–108 are compositionally biased toward low complexity; it reads SGRGRSYSRSSSTAAAAAPKPAEGAMVTGGSSSSSRGSGSS.

The protein resides in the nucleus. Its function is as follows. Transcription factor; part of the gene cluster that mediates the biosynthesis of the phomopsins, a group of hexapeptide mycotoxins which infects lupins and causes lupinosis disease in livestock. May play a role in the regulation of the production of phomopsins. The sequence is that of Transcription factor phomR from Diaporthe leptostromiformis (Lupinosis disease fungus).